The sequence spans 157 residues: Small ribosomal subunit protein uS7 (157 aa).

The protein belongs to the universal ribosomal protein uS7 family. Part of the 30S ribosomal subunit. Contacts proteins S9 and S11.

Functionally, one of the primary rRNA binding proteins, it binds directly to 16S rRNA where it nucleates assembly of the head domain of the 30S subunit. Is located at the subunit interface close to the decoding center, probably blocks exit of the E-site tRNA. This Borrelia turicatae (strain 91E135) protein is Small ribosomal subunit protein uS7.